The following is a 94-amino-acid chain: Small ribosomal subunit protein bS6 (94 aa).

It belongs to the bacterial ribosomal protein bS6 family.

Binds together with bS18 to 16S ribosomal RNA. In Alkaliphilus metalliredigens (strain QYMF), this protein is Small ribosomal subunit protein bS6.